We begin with the raw amino-acid sequence, 436 residues long: Trigger factor (436 aa).

One can recognise a PPIase FKBP-type domain in the interval 163-248 (GDTVVIDFDG…IHEVKEKQLP (86 aa)).

It belongs to the FKBP-type PPIase family. Tig subfamily.

It is found in the cytoplasm. It carries out the reaction [protein]-peptidylproline (omega=180) = [protein]-peptidylproline (omega=0). Its function is as follows. Involved in protein export. Acts as a chaperone by maintaining the newly synthesized protein in an open conformation. Functions as a peptidyl-prolyl cis-trans isomerase. The chain is Trigger factor from Levilactobacillus brevis (strain ATCC 367 / BCRC 12310 / CIP 105137 / JCM 1170 / LMG 11437 / NCIMB 947 / NCTC 947) (Lactobacillus brevis).